Here is a 195-residue protein sequence, read N- to C-terminus: Phosphoheptose isomerase (195 aa).

Residues Ile-37 to Gln-195 form the SIS domain. Asn-52–Gly-54 contributes to the substrate binding site. Zn(2+)-binding residues include His-61 and Glu-65. Residues Glu-65, Asn-93–Asp-94, Ser-119–Ser-121, Ser-124, and Gln-172 contribute to the substrate site. Gln-172 and His-180 together coordinate Zn(2+).

Belongs to the SIS family. GmhA subfamily. Homotetramer. Requires Zn(2+) as cofactor.

Its subcellular location is the cytoplasm. The catalysed reaction is 2 D-sedoheptulose 7-phosphate = D-glycero-alpha-D-manno-heptose 7-phosphate + D-glycero-beta-D-manno-heptose 7-phosphate. It functions in the pathway carbohydrate biosynthesis; D-glycero-D-manno-heptose 7-phosphate biosynthesis; D-glycero-alpha-D-manno-heptose 7-phosphate and D-glycero-beta-D-manno-heptose 7-phosphate from sedoheptulose 7-phosphate: step 1/1. Its function is as follows. Catalyzes the isomerization of sedoheptulose 7-phosphate in D-glycero-D-manno-heptose 7-phosphate. The chain is Phosphoheptose isomerase from Histophilus somni (strain 2336) (Haemophilus somnus).